The following is a 715-amino-acid chain: Fatty acid oxidation complex subunit alpha (715 aa).

An enoyl-CoA hydratase/isomerase region spans residues 1–190; sequence MIYEGKAITV…KVGAVDAVVA (190 aa). Aspartate 297 contacts substrate. The tract at residues 312–715 is 3-hydroxyacyl-CoA dehydrogenase; it reads HDVKQAAVLG…MAKNGQRFFN (404 aa). NAD(+) is bound by residues methionine 325, aspartate 344, 401 to 403, lysine 408, and serine 430; that span reads VVE. The active-site For 3-hydroxyacyl-CoA dehydrogenase activity is histidine 451. Asparagine 454 is a binding site for NAD(+). Substrate is bound by residues asparagine 501 and tyrosine 660.

It in the N-terminal section; belongs to the enoyl-CoA hydratase/isomerase family. In the C-terminal section; belongs to the 3-hydroxyacyl-CoA dehydrogenase family. Heterotetramer of two alpha chains (FadB) and two beta chains (FadA).

It carries out the reaction a (3S)-3-hydroxyacyl-CoA + NAD(+) = a 3-oxoacyl-CoA + NADH + H(+). The enzyme catalyses a (3S)-3-hydroxyacyl-CoA = a (2E)-enoyl-CoA + H2O. The catalysed reaction is a 4-saturated-(3S)-3-hydroxyacyl-CoA = a (3E)-enoyl-CoA + H2O. It catalyses the reaction (3S)-3-hydroxybutanoyl-CoA = (3R)-3-hydroxybutanoyl-CoA. It carries out the reaction a (3Z)-enoyl-CoA = a 4-saturated (2E)-enoyl-CoA. The enzyme catalyses a (3E)-enoyl-CoA = a 4-saturated (2E)-enoyl-CoA. The protein operates within lipid metabolism; fatty acid beta-oxidation. Involved in the aerobic and anaerobic degradation of long-chain fatty acids via beta-oxidation cycle. Catalyzes the formation of 3-oxoacyl-CoA from enoyl-CoA via L-3-hydroxyacyl-CoA. It can also use D-3-hydroxyacyl-CoA and cis-3-enoyl-CoA as substrate. The polypeptide is Fatty acid oxidation complex subunit alpha (Pseudomonas putida (Arthrobacter siderocapsulatus)).